The primary structure comprises 535 residues: T-complex protein 1 subunit zeta 2 (535 aa).

Belongs to the TCP-1 chaperonin family. As to quaternary structure, heterooligomeric complex of about 850 to 900 kDa that forms two stacked rings, 12 to 16 nm in diameter.

The protein localises to the cytoplasm. Functionally, molecular chaperone; assists the folding of proteins upon ATP hydrolysis. Known to play a role, in vitro, in the folding of actin and tubulin. The polypeptide is T-complex protein 1 subunit zeta 2 (Arabidopsis thaliana (Mouse-ear cress)).